The chain runs to 171 residues: S-ribosylhomocysteine lyase (171 aa).

Fe cation-binding residues include His54, His58, and Cys128.

It belongs to the LuxS family. Homodimer. Fe cation serves as cofactor.

It catalyses the reaction S-(5-deoxy-D-ribos-5-yl)-L-homocysteine = (S)-4,5-dihydroxypentane-2,3-dione + L-homocysteine. Its function is as follows. Involved in the synthesis of autoinducer 2 (AI-2) which is secreted by bacteria and is used to communicate both the cell density and the metabolic potential of the environment. The regulation of gene expression in response to changes in cell density is called quorum sensing. Catalyzes the transformation of S-ribosylhomocysteine (RHC) to homocysteine (HC) and 4,5-dihydroxy-2,3-pentadione (DPD). The sequence is that of S-ribosylhomocysteine lyase from Escherichia coli (strain 55989 / EAEC).